Consider the following 342-residue polypeptide: Nicotinate-nucleotide--dimethylbenzimidazole phosphoribosyltransferase (342 aa).

The active-site Proton acceptor is the glutamate 311.

Belongs to the CobT family.

The catalysed reaction is 5,6-dimethylbenzimidazole + nicotinate beta-D-ribonucleotide = alpha-ribazole 5'-phosphate + nicotinate + H(+). The protein operates within nucleoside biosynthesis; alpha-ribazole biosynthesis; alpha-ribazole from 5,6-dimethylbenzimidazole: step 1/2. Functionally, catalyzes the synthesis of alpha-ribazole-5'-phosphate from nicotinate mononucleotide (NAMN) and 5,6-dimethylbenzimidazole (DMB). The polypeptide is Nicotinate-nucleotide--dimethylbenzimidazole phosphoribosyltransferase (Shewanella loihica (strain ATCC BAA-1088 / PV-4)).